The primary structure comprises 262 residues: Carboxy-S-adenosyl-L-methionine synthase (262 aa).

S-adenosyl-L-methionine is bound by residues Tyr50, 84 to 86 (GCS), 137 to 138 (DI), Asn152, and Arg219.

Belongs to the class I-like SAM-binding methyltransferase superfamily. Cx-SAM synthase family. In terms of assembly, homodimer.

It carries out the reaction prephenate + S-adenosyl-L-methionine = carboxy-S-adenosyl-L-methionine + 3-phenylpyruvate + H2O. Its function is as follows. Catalyzes the conversion of S-adenosyl-L-methionine (SAM) to carboxy-S-adenosyl-L-methionine (Cx-SAM). This chain is Carboxy-S-adenosyl-L-methionine synthase, found in Psychrobacter arcticus (strain DSM 17307 / VKM B-2377 / 273-4).